Consider the following 511-residue polypeptide: Trafficking protein particle complex subunit 13 homolog (511 aa).

Belongs to the TRAPPC13 family.

The protein is Trafficking protein particle complex subunit 13 homolog of Dictyostelium discoideum (Social amoeba).